The following is an 82-amino-acid chain: Small ribosomal subunit protein bS16 (82 aa).

It belongs to the bacterial ribosomal protein bS16 family.

This chain is Small ribosomal subunit protein bS16, found in Psychromonas ingrahamii (strain DSM 17664 / CCUG 51855 / 37).